The primary structure comprises 180 residues: Inner membrane-spanning protein YciB (180 aa).

Transmembrane regions (helical) follow at residues 22-42 (IYVA…LTWL), 50-70 (MTLI…VFHN), 76-96 (WKVT…QVVL), 121-141 (AAWA…AFWL), and 149-169 (FKVF…GIYI).

It belongs to the YciB family.

The protein localises to the cell inner membrane. In terms of biological role, plays a role in cell envelope biogenesis, maintenance of cell envelope integrity and membrane homeostasis. The chain is Inner membrane-spanning protein YciB from Edwardsiella ictaluri (strain 93-146).